Consider the following 726-residue polypeptide: Catalase-peroxidase (726 aa).

The tryptophyl-tyrosyl-methioninium (Trp-Tyr) (with M-239) cross-link spans 90–213; it reads WHAAGTYRIG…LAAVQMGLIY (124 aa). Residue His-91 is the Proton acceptor of the active site. A cross-link (tryptophyl-tyrosyl-methioninium (Tyr-Met) (with W-90)) is located at residues 213–239; that stretch reads YVNPEGPNGKPDPAAAARDIRETFARM. His-254 contacts heme b. The segment at 338 to 359 is disordered; it reads TPKGGAGAGTVPDAHDPSKRHA.

It belongs to the peroxidase family. Peroxidase/catalase subfamily. In terms of assembly, homodimer or homotetramer. Heme b is required as a cofactor. In terms of processing, formation of the three residue Trp-Tyr-Met cross-link is important for the catalase, but not the peroxidase activity of the enzyme.

The enzyme catalyses H2O2 + AH2 = A + 2 H2O. The catalysed reaction is 2 H2O2 = O2 + 2 H2O. Bifunctional enzyme with both catalase and broad-spectrum peroxidase activity. This Bradyrhizobium sp. (strain ORS 278) protein is Catalase-peroxidase.